Here is a 248-residue protein sequence, read N- to C-terminus: tRNA (guanine-N(1)-)-methyltransferase (248 aa).

S-adenosyl-L-methionine contacts are provided by residues Gly-113 and 133–138 (VGDYVL).

The protein belongs to the RNA methyltransferase TrmD family. In terms of assembly, homodimer.

The protein localises to the cytoplasm. The catalysed reaction is guanosine(37) in tRNA + S-adenosyl-L-methionine = N(1)-methylguanosine(37) in tRNA + S-adenosyl-L-homocysteine + H(+). Functionally, specifically methylates guanosine-37 in various tRNAs. The sequence is that of tRNA (guanine-N(1)-)-methyltransferase from Shewanella oneidensis (strain ATCC 700550 / JCM 31522 / CIP 106686 / LMG 19005 / NCIMB 14063 / MR-1).